The chain runs to 61 residues: Small ribosomal subunit protein uS14B (61 aa).

Residues Cys-24, Cys-27, Cys-40, and Cys-43 each contribute to the Zn(2+) site.

This sequence belongs to the universal ribosomal protein uS14 family. Zinc-binding uS14 subfamily. Part of the 30S ribosomal subunit. Contacts proteins S3 and S10. Zn(2+) serves as cofactor.

Functionally, binds 16S rRNA, required for the assembly of 30S particles and may also be responsible for determining the conformation of the 16S rRNA at the A site. The protein is Small ribosomal subunit protein uS14B of Lacticaseibacillus paracasei (strain ATCC 334 / BCRC 17002 / CCUG 31169 / CIP 107868 / KCTC 3260 / NRRL B-441) (Lactobacillus paracasei).